The following is a 181-amino-acid chain: Shikimate kinase 2 (181 aa).

An ATP-binding site is contributed by 12–17; the sequence is GCGKTT. Positions 16 and 32 each coordinate Mg(2+). Residues D34, R58, and G79 each coordinate substrate. Residues 112-126 form an LID domain region; that stretch reads EAEPEVGLRPTLTGK. Residue R120 coordinates ATP. R139 contacts substrate.

It belongs to the shikimate kinase family. AroL subfamily. In terms of assembly, monomer. Mg(2+) serves as cofactor.

It localises to the cytoplasm. The enzyme catalyses shikimate + ATP = 3-phosphoshikimate + ADP + H(+). It functions in the pathway metabolic intermediate biosynthesis; chorismate biosynthesis; chorismate from D-erythrose 4-phosphate and phosphoenolpyruvate: step 5/7. Its function is as follows. Catalyzes the specific phosphorylation of the 3-hydroxyl group of shikimic acid using ATP as a cosubstrate. The polypeptide is Shikimate kinase 2 (Escherichia fergusonii (strain ATCC 35469 / DSM 13698 / CCUG 18766 / IAM 14443 / JCM 21226 / LMG 7866 / NBRC 102419 / NCTC 12128 / CDC 0568-73)).